The primary structure comprises 282 residues: MKRRPAVAGSFYEDDSAQLRKRIEWAFHHPIGPGGIPSVGSTGSRSNPIFIVPHAGYIYSGPVAAHSYYYLAQEGKPDIVIILGPNHTGYGSQVSIWPGGDWETPLGSAQVNAQLVKELVSVSEVVDIDEKAHLYEHSIEVQLPFLQYFFDNLSILPVVILMQTPEIAEFVAEGIWRFIQRHSDKDIVVLASSDLNHYDPHDVTMTKDELVIRKIQDMDYKGLYKVVEEYDVTVCGYAPIMASLILAKKMHKKPYILKHATSGDTSGDKSSVVGYLATRFSD.

This sequence belongs to the MEMO1 family.

The sequence is that of MEMO1 family protein Msed_2139 from Metallosphaera sedula (strain ATCC 51363 / DSM 5348 / JCM 9185 / NBRC 15509 / TH2).